A 52-amino-acid chain; its full sequence is Alpha-crystallin B chain (52 aa).

The protein belongs to the small heat shock protein (HSP20) family. Homodimer. Aggregates with homologous proteins, including alpha-A-crystallin and the small heat shock protein HSPB1, to form large heteromeric complexes.

Its function is as follows. May contribute to the transparency and refractive index of the lens. The polypeptide is Alpha-crystallin B chain (CRYAB) (Eudromia elegans (Elegant crested-tinamou)).